Consider the following 160-residue polypeptide: 3-hydroxyacyl-[acyl-carrier-protein] dehydratase FabZ (160 aa).

The active site involves histidine 60.

This sequence belongs to the thioester dehydratase family. FabZ subfamily.

The protein resides in the cytoplasm. It catalyses the reaction a (3R)-hydroxyacyl-[ACP] = a (2E)-enoyl-[ACP] + H2O. Involved in unsaturated fatty acids biosynthesis. Catalyzes the dehydration of short chain beta-hydroxyacyl-ACPs and long chain saturated and unsaturated beta-hydroxyacyl-ACPs. The chain is 3-hydroxyacyl-[acyl-carrier-protein] dehydratase FabZ from Rhodospirillum rubrum (strain ATCC 11170 / ATH 1.1.1 / DSM 467 / LMG 4362 / NCIMB 8255 / S1).